Here is a 64-residue protein sequence, read N- to C-terminus: MRQGCKFRGSSQKIRWSRSPPSSLLHTLRPRLLSAEITLQTNLPLQSPCCRLCFLRGTQAKTLK.

Widely expressed; not found in breast.

This is an uncharacterized protein from Homo sapiens (Human).